The following is a 533-amino-acid chain: CTP synthase (533 aa).

An amidoligase domain region spans residues 1 to 265; sequence MTKFIFVTGG…ARYLVRRLGL (265 aa). Ser-13 is a binding site for CTP. Ser-13 is a binding site for UTP. Position 14-19 (14-19) interacts with ATP; that stretch reads GLGKGI. Tyr-54 contacts L-glutamine. Asp-71 is an ATP binding site. Positions 71 and 139 each coordinate Mg(2+). CTP is bound by residues 146–148, 186–191, and Lys-222; these read DIE and KTKPTQ. UTP-binding positions include 186–191 and Lys-222; that span reads KTKPTQ. Residues 290–532 enclose the Glutamine amidotransferase type-1 domain; the sequence is EIAIVGKYVK…VRAARERKYG (243 aa). Gly-351 lines the L-glutamine pocket. Cys-378 acts as the Nucleophile; for glutamine hydrolysis in catalysis. L-glutamine contacts are provided by residues 379-382, Glu-402, and Arg-459; that span reads FGFQ. Active-site residues include His-505 and Glu-507.

This sequence belongs to the CTP synthase family. As to quaternary structure, homotetramer.

The enzyme catalyses UTP + L-glutamine + ATP + H2O = CTP + L-glutamate + ADP + phosphate + 2 H(+). It carries out the reaction L-glutamine + H2O = L-glutamate + NH4(+). The catalysed reaction is UTP + NH4(+) + ATP = CTP + ADP + phosphate + 2 H(+). It participates in pyrimidine metabolism; CTP biosynthesis via de novo pathway; CTP from UDP: step 2/2. Its activity is regulated as follows. Allosterically activated by GTP, when glutamine is the substrate; GTP has no effect on the reaction when ammonia is the substrate. The allosteric effector GTP functions by stabilizing the protein conformation that binds the tetrahedral intermediate(s) formed during glutamine hydrolysis. Inhibited by the product CTP, via allosteric rather than competitive inhibition. Catalyzes the ATP-dependent amination of UTP to CTP with either L-glutamine or ammonia as the source of nitrogen. Regulates intracellular CTP levels through interactions with the four ribonucleotide triphosphates. This Thermococcus gammatolerans (strain DSM 15229 / JCM 11827 / EJ3) protein is CTP synthase.